Consider the following 394-residue polypeptide: Phosphopentomutase (394 aa).

Mn(2+) is bound by residues Asp-15, Asp-288, His-293, Asp-329, His-330, and His-341.

It belongs to the phosphopentomutase family. Requires Mn(2+) as cofactor.

It is found in the cytoplasm. The catalysed reaction is 2-deoxy-alpha-D-ribose 1-phosphate = 2-deoxy-D-ribose 5-phosphate. It carries out the reaction alpha-D-ribose 1-phosphate = D-ribose 5-phosphate. It participates in carbohydrate degradation; 2-deoxy-D-ribose 1-phosphate degradation; D-glyceraldehyde 3-phosphate and acetaldehyde from 2-deoxy-alpha-D-ribose 1-phosphate: step 1/2. Isomerase that catalyzes the conversion of deoxy-ribose 1-phosphate (dRib-1-P) and ribose 1-phosphate (Rib-1-P) to deoxy-ribose 5-phosphate (dRib-5-P) and ribose 5-phosphate (Rib-5-P), respectively. This chain is Phosphopentomutase (drm), found in Bacillus subtilis (strain 168).